The sequence spans 448 residues: Putative flavin-containing monooxygenase FMO GS-OX-like 10 (448 aa).

18–23 (GAGAAG) is an FAD binding site. 212-217 (GSSVSG) is a binding site for NADP(+).

The protein belongs to the FMO family. FAD is required as a cofactor.

In terms of biological role, catalyzes the conversion of methylthioalkyl glucosinolates of any chain length into methylsulfinylalkyl glucosinolates. The polypeptide is Putative flavin-containing monooxygenase FMO GS-OX-like 10 (Arabidopsis thaliana (Mouse-ear cress)).